Consider the following 406-residue polypeptide: MANVLDELLDRGYIKQFTHEEETRKLLENEKVTFYIGFDPTADSLHVGHFIAMMFMAHMQRAGHRPIALLGGGTAMVGDPSGKTDMRKMLTKEQIQHNVDSIKKQMERFIDFSDDKALIVNNADWLLDLNYVDFLREVGVHFSVNRMLSAECFKQRLEKGLSFLEFNYMLMQGYDFYVLNQKYGCKMELGGDDQWSNMIAGVELVRRKAQGDAMAMTCTLLTNSQGQKMGKTVGGALWLDADKVSPFDFYQYWRNVDDADVEKCLALLTFLPMDEVRRLGALEGAEINGAKKILAYEVTKLVHGDEEAKKAEEAANALFSGGADMSNVPTVIISKEDLGSTVLDVIAKVKIVPSKKEGRRLIEQGGLSINGEKITELTRTLNDDDFKDGSALIKRGKKNYNKIEIQ.

An L-tyrosine-binding site is contributed by tyrosine 35. A 'HIGH' region motif is present at residues 40 to 49 (PTADSLHVGH). The L-tyrosine site is built by tyrosine 168 and glutamine 172. The short motif at 228-232 (KMGKT) is the 'KMSKS' region element. Lysine 231 provides a ligand contact to ATP. In terms of domain architecture, S4 RNA-binding spans 340–405 (STVLDVIAKV…GKKNYNKIEI (66 aa)).

This sequence belongs to the class-I aminoacyl-tRNA synthetase family. TyrS type 1 subfamily. In terms of assembly, homodimer.

It localises to the cytoplasm. It carries out the reaction tRNA(Tyr) + L-tyrosine + ATP = L-tyrosyl-tRNA(Tyr) + AMP + diphosphate + H(+). Functionally, catalyzes the attachment of tyrosine to tRNA(Tyr) in a two-step reaction: tyrosine is first activated by ATP to form Tyr-AMP and then transferred to the acceptor end of tRNA(Tyr). The polypeptide is Tyrosine--tRNA ligase (Clostridium botulinum (strain Eklund 17B / Type B)).